Reading from the N-terminus, the 203-residue chain is Inosine triphosphate pyrophosphatase (203 aa).

13 to 18 contributes to the ITP binding site; that stretch reads TGNAKK. Glu-43 serves as a coordination point for Mg(2+). ITP is bound by residues Lys-55, 71–72, Lys-88, 147–150, Lys-170, and 175–176; these read DT, FGWD, and HR.

The protein belongs to the HAM1 NTPase family. In terms of assembly, homodimer. Requires Mg(2+) as cofactor. Mn(2+) is required as a cofactor.

Its subcellular location is the cytoplasm. The catalysed reaction is ITP + H2O = IMP + diphosphate + H(+). The enzyme catalyses dITP + H2O = dIMP + diphosphate + H(+). It carries out the reaction XTP + H2O = XMP + diphosphate + H(+). It catalyses the reaction N(6)-hydroxy-dATP + H2O = N(6)-hydroxy-dAMP + diphosphate + H(+). Functionally, pyrophosphatase that hydrolyzes the non-canonical purine nucleotides inosine triphosphate (ITP), deoxyinosine triphosphate (dITP) as well as 2'-deoxy-N-6-hydroxylaminopurine triphosphate (dHAPTP) and xanthosine 5'-triphosphate (XTP) to their respective monophosphate derivatives. The enzyme does not distinguish between the deoxy- and ribose forms. Probably excludes non-canonical purines from RNA and DNA precursor pools, thus preventing their incorporation into RNA and DNA and avoiding chromosomal lesions. In Danio rerio (Zebrafish), this protein is Inosine triphosphate pyrophosphatase (itpa).